A 444-amino-acid polypeptide reads, in one-letter code: E3 ubiquitin-protein ligase RNFT2 (444 aa).

Over 1-181 (MWLFTVNQVL…ILLAKLCFQH (181 aa)) the chain is Extracellular. Disordered stretches follow at residues 13–41 (MQRRHSSNTDNIPPERNRSQALSSEASVD) and 92–149 (PASR…PGTP). Basic residues predominate over residues 107-121 (YHHRQPHHHFHHGGH). The span at 131-140 (GGDHRGHSEE) shows a compositional bias: basic and acidic residues. A helical transmembrane segment spans residues 182 to 202 (KLGIAVCIGMASTFAYANSTL). Residues 203-214 (REQVSLKEKRSV) are Cytoplasmic-facing. The helical transmembrane segment at 215–235 (LVILWILAFLAGNTLYVLYTF) threads the bilayer. Residues 236 to 255 (SSQQLYNSLIFLKPNLEMLD) are Extracellular-facing. The helical transmembrane segment at 256-276 (FFDLLWIVGIADFVLKYITIA) threads the bilayer. The Cytoplasmic segment spans residues 277-329 (LKCLIVALPKIILAVKSKGKFYLVIEELSQLFRSLVPIQLWYKYIMGDDSSNS). A helical membrane pass occupies residues 330-350 (YFLGGVLIVLYSLCKSFDICG). At 351–444 (RVGGVRKALK…GATSAHFQVY (94 aa)) the chain is on the extracellular side. An RING-type zinc finger spans residues 384–422 (CAICQAEFREPLILLCQHVFCEECLCLWLDRERTCPLCR).

The protein resides in the membrane. In terms of biological role, E3 ubiquitin-protein ligase that negatively regulates IL3-dependent cellular responses through IL3RA ubiquitination and degradation by the proteasome, having an anti-inflammatory effect. The chain is E3 ubiquitin-protein ligase RNFT2 from Homo sapiens (Human).